A 337-amino-acid polypeptide reads, in one-letter code: Glyceraldehyde-3-phosphate dehydrogenase (337 aa).

NAD(+) is bound by residues 12 to 13 (RI), aspartate 34, and lysine 79. D-glyceraldehyde 3-phosphate-binding positions include 150 to 152 (SCT), threonine 181, 210 to 211 (TG), and arginine 233. Cysteine 151 (nucleophile) is an active-site residue. Asparagine 315 serves as a coordination point for NAD(+).

Belongs to the glyceraldehyde-3-phosphate dehydrogenase family. Homotetramer.

It is found in the cytoplasm. It catalyses the reaction D-glyceraldehyde 3-phosphate + phosphate + NAD(+) = (2R)-3-phospho-glyceroyl phosphate + NADH + H(+). It functions in the pathway carbohydrate degradation; glycolysis; pyruvate from D-glyceraldehyde 3-phosphate: step 1/5. The chain is Glyceraldehyde-3-phosphate dehydrogenase (GPD) from Cochliobolus lunatus (Filamentous fungus).